The sequence spans 294 residues: 4-hydroxy-tetrahydrodipicolinate synthase (294 aa).

Thr-45 lines the pyruvate pocket. Catalysis depends on Tyr-133, which acts as the Proton donor/acceptor. Lys-161 (schiff-base intermediate with substrate) is an active-site residue. Ile-203 provides a ligand contact to pyruvate.

This sequence belongs to the DapA family. As to quaternary structure, homotetramer; dimer of dimers.

The protein localises to the cytoplasm. The enzyme catalyses L-aspartate 4-semialdehyde + pyruvate = (2S,4S)-4-hydroxy-2,3,4,5-tetrahydrodipicolinate + H2O + H(+). It participates in amino-acid biosynthesis; L-lysine biosynthesis via DAP pathway; (S)-tetrahydrodipicolinate from L-aspartate: step 3/4. Functionally, catalyzes the condensation of (S)-aspartate-beta-semialdehyde [(S)-ASA] and pyruvate to 4-hydroxy-tetrahydrodipicolinate (HTPA). The sequence is that of 4-hydroxy-tetrahydrodipicolinate synthase from Shewanella pealeana (strain ATCC 700345 / ANG-SQ1).